The sequence spans 165 residues: Chorismate pyruvate-lyase (165 aa).

4 residues coordinate substrate: Met-35, Arg-77, Leu-115, and Glu-156.

Belongs to the UbiC family. In terms of assembly, monomer.

It localises to the cytoplasm. The catalysed reaction is chorismate = 4-hydroxybenzoate + pyruvate. It participates in cofactor biosynthesis; ubiquinone biosynthesis. In terms of biological role, removes the pyruvyl group from chorismate, with concomitant aromatization of the ring, to provide 4-hydroxybenzoate (4HB) for the ubiquinone pathway. This Salmonella arizonae (strain ATCC BAA-731 / CDC346-86 / RSK2980) protein is Chorismate pyruvate-lyase.